Here is a 126-residue protein sequence, read N- to C-terminus: Phosphoribosyl-AMP cyclohydrolase (126 aa).

Asp-76 serves as a coordination point for Mg(2+). Cys-77 lines the Zn(2+) pocket. Residues Asp-78 and Asp-80 each contribute to the Mg(2+) site. Zn(2+) contacts are provided by Cys-94 and Cys-101.

Belongs to the PRA-CH family. Homodimer. It depends on Mg(2+) as a cofactor. Requires Zn(2+) as cofactor.

It localises to the cytoplasm. It carries out the reaction 1-(5-phospho-beta-D-ribosyl)-5'-AMP + H2O = 1-(5-phospho-beta-D-ribosyl)-5-[(5-phospho-beta-D-ribosylamino)methylideneamino]imidazole-4-carboxamide. It participates in amino-acid biosynthesis; L-histidine biosynthesis; L-histidine from 5-phospho-alpha-D-ribose 1-diphosphate: step 3/9. Functionally, catalyzes the hydrolysis of the adenine ring of phosphoribosyl-AMP. This chain is Phosphoribosyl-AMP cyclohydrolase, found in Vesicomyosocius okutanii subsp. Calyptogena okutanii (strain HA).